A 457-amino-acid polypeptide reads, in one-letter code: Chromosomal replication initiator protein DnaA (457 aa).

A domain I, interacts with DnaA modulators region spans residues 1–90 (MDTNNNIEKE…HSVDVRIEVA (90 aa)). Residues 91-112 (PKIQINAQSNINYKAIKTSVKD) form a domain II region. A domain III, AAA+ region region spans residues 113 to 323 (SYTFENFVVG…GAIIKISVNA (211 aa)). ATP is bound by residues glycine 153, glycine 155, lysine 156, and threonine 157. The interval 324 to 457 (NLMNASIDLN…DKKTAFNSSE (134 aa)) is domain IV, binds dsDNA.

The protein belongs to the DnaA family. As to quaternary structure, oligomerizes as a right-handed, spiral filament on DNA at oriC. Interacts via domain I with HobA. In a crystal with domains I and II of DnaA HobA forms tetramers with DnaA fragments bound at the dimer interface of the tetramer.

It is found in the cytoplasm. It localises to the cell inner membrane. Functionally, plays an essential role in the initiation and regulation of chromosomal replication. ATP-DnaA binds to the origin of replication (oriC) to initiate formation of the DNA replication initiation complex once per cell cycle. Binds the DnaA box (a 9 base pair repeat at the origin) and separates the double-stranded (ds)DNA. Forms a right-handed helical filament on oriC DNA; dsDNA binds to the exterior of the filament while single-stranded (ss)DNA is stabiized in the filament's interior. The ATP-DnaA-oriC complex binds and stabilizes one strand of the AT-rich DNA unwinding element (DUE), permitting loading of DNA polymerase. After initiation quickly degrades to an ADP-DnaA complex that is not apt for DNA replication. Binds acidic phospholipids. The DnaA box is 5'-TTATC[CA]A[CA]A-3' in this bacterium cycle. Multiple discrete DnaA-oriC complexes can be seen as DnaA levels increase. Binding of DnaA to oriC is increased by HobA; some chi-type structures can be seen by electron microscopy. Strand separation requires the DnaA boxes and adjacent DnaA-trio motifs but works equally well with ADP or ATP. This is Chromosomal replication initiator protein DnaA from Helicobacter pylori (strain ATCC 700392 / 26695) (Campylobacter pylori).